The primary structure comprises 253 residues: Ubiquinone/menaquinone biosynthesis C-methyltransferase UbiE (253 aa).

S-adenosyl-L-methionine-binding positions include threonine 76, aspartate 97, and 125-126; that span reads NA.

It belongs to the class I-like SAM-binding methyltransferase superfamily. MenG/UbiE family.

The enzyme catalyses a 2-demethylmenaquinol + S-adenosyl-L-methionine = a menaquinol + S-adenosyl-L-homocysteine + H(+). The catalysed reaction is a 2-methoxy-6-(all-trans-polyprenyl)benzene-1,4-diol + S-adenosyl-L-methionine = a 5-methoxy-2-methyl-3-(all-trans-polyprenyl)benzene-1,4-diol + S-adenosyl-L-homocysteine + H(+). It participates in quinol/quinone metabolism; menaquinone biosynthesis; menaquinol from 1,4-dihydroxy-2-naphthoate: step 2/2. Its pathway is cofactor biosynthesis; ubiquinone biosynthesis. Methyltransferase required for the conversion of demethylmenaquinol (DMKH2) to menaquinol (MKH2) and the conversion of 2-polyprenyl-6-methoxy-1,4-benzoquinol (DDMQH2) to 2-polyprenyl-3-methyl-6-methoxy-1,4-benzoquinol (DMQH2). The chain is Ubiquinone/menaquinone biosynthesis C-methyltransferase UbiE from Bradyrhizobium sp. (strain BTAi1 / ATCC BAA-1182).